The sequence spans 360 residues: Phenylalanine--tRNA ligase alpha subunit (360 aa).

A Mg(2+)-binding site is contributed by E260.

This sequence belongs to the class-II aminoacyl-tRNA synthetase family. Phe-tRNA synthetase alpha subunit type 1 subfamily. Tetramer of two alpha and two beta subunits. Requires Mg(2+) as cofactor.

Its subcellular location is the cytoplasm. The catalysed reaction is tRNA(Phe) + L-phenylalanine + ATP = L-phenylalanyl-tRNA(Phe) + AMP + diphosphate + H(+). This Agrobacterium fabrum (strain C58 / ATCC 33970) (Agrobacterium tumefaciens (strain C58)) protein is Phenylalanine--tRNA ligase alpha subunit.